Here is a 182-residue protein sequence, read N- to C-terminus: UPF0397 protein BcerKBAB4_2500 (182 aa).

The next 5 membrane-spanning stretches (helical) occupy residues 9–29, 40–60, 71–91, 114–134, and 142–162; these read VVAI…GFSI, AILT…IGLI, WGIW…MGLI, IAGL…DIIV, and IVIQ…VLGL.

The protein belongs to the UPF0397 family.

The protein localises to the cell membrane. This chain is UPF0397 protein BcerKBAB4_2500, found in Bacillus mycoides (strain KBAB4) (Bacillus weihenstephanensis).